Consider the following 50-residue polypeptide: Conotoxin Cal6.19 (50 aa).

The signal sequence occupies residues 1-22; it reads MKVTCVLVLTLMALTVCQVATA. Cystine bridges form between C24–C37, C30–C41, and C36–C46.

Expressed by the venom duct.

It is found in the secreted. Probable neurotoxin. This chain is Conotoxin Cal6.19, found in Californiconus californicus (California cone).